The sequence spans 159 residues: 6,7-dimethyl-8-ribityllumazine synthase (159 aa).

Residues Phe22, 57-59 (AVE), and 81-83 (AVI) contribute to the 5-amino-6-(D-ribitylamino)uracil site. Residue 86 to 87 (GT) participates in (2S)-2-hydroxy-3-oxobutyl phosphate binding. His89 functions as the Proton donor in the catalytic mechanism. Residue Phe114 participates in 5-amino-6-(D-ribitylamino)uracil binding. Arg128 is a (2S)-2-hydroxy-3-oxobutyl phosphate binding site.

It belongs to the DMRL synthase family. In terms of assembly, forms an icosahedral capsid composed of 60 subunits, arranged as a dodecamer of pentamers.

The catalysed reaction is (2S)-2-hydroxy-3-oxobutyl phosphate + 5-amino-6-(D-ribitylamino)uracil = 6,7-dimethyl-8-(1-D-ribityl)lumazine + phosphate + 2 H2O + H(+). It participates in cofactor biosynthesis; riboflavin biosynthesis; riboflavin from 2-hydroxy-3-oxobutyl phosphate and 5-amino-6-(D-ribitylamino)uracil: step 1/2. Its function is as follows. Catalyzes the formation of 6,7-dimethyl-8-ribityllumazine by condensation of 5-amino-6-(D-ribitylamino)uracil with 3,4-dihydroxy-2-butanone 4-phosphate. This is the penultimate step in the biosynthesis of riboflavin. In Shewanella denitrificans (strain OS217 / ATCC BAA-1090 / DSM 15013), this protein is 6,7-dimethyl-8-ribityllumazine synthase.